The following is a 186-amino-acid chain: Elongation factor P (186 aa).

Belongs to the elongation factor P family.

It localises to the cytoplasm. Its pathway is protein biosynthesis; polypeptide chain elongation. Functionally, involved in peptide bond synthesis. Stimulates efficient translation and peptide-bond synthesis on native or reconstituted 70S ribosomes in vitro. Probably functions indirectly by altering the affinity of the ribosome for aminoacyl-tRNA, thus increasing their reactivity as acceptors for peptidyl transferase. This is Elongation factor P from Shewanella piezotolerans (strain WP3 / JCM 13877).